We begin with the raw amino-acid sequence, 221 residues long: Protein-L-isoaspartate O-methyltransferase (221 aa).

The active site involves Ser-68.

The protein belongs to the methyltransferase superfamily. L-isoaspartyl/D-aspartyl protein methyltransferase family.

The protein resides in the cytoplasm. The enzyme catalyses [protein]-L-isoaspartate + S-adenosyl-L-methionine = [protein]-L-isoaspartate alpha-methyl ester + S-adenosyl-L-homocysteine. In terms of biological role, catalyzes the methyl esterification of L-isoaspartyl residues in peptides and proteins that result from spontaneous decomposition of normal L-aspartyl and L-asparaginyl residues. It plays a role in the repair and/or degradation of damaged proteins. The protein is Protein-L-isoaspartate O-methyltransferase of Desulfosudis oleivorans (strain DSM 6200 / JCM 39069 / Hxd3) (Desulfococcus oleovorans).